The following is a 244-amino-acid chain: Large ribosomal subunit protein uL2 (244 aa).

Basic residues predominate over residues 1–12; sequence MGKRILVQRRGR. Disordered regions lie at residues 1 to 26 and 193 to 225; these read MGKR…KRDG and AMSP…KVGF.

Belongs to the universal ribosomal protein uL2 family. As to quaternary structure, part of the 50S ribosomal subunit. Forms a bridge to the 30S subunit in the 70S ribosome.

In terms of biological role, one of the primary rRNA binding proteins. Required for association of the 30S and 50S subunits to form the 70S ribosome, for tRNA binding and peptide bond formation. It has been suggested to have peptidyltransferase activity; this is somewhat controversial. Makes several contacts with the 16S rRNA in the 70S ribosome. This chain is Large ribosomal subunit protein uL2, found in Pyrobaculum calidifontis (strain DSM 21063 / JCM 11548 / VA1).